A 90-amino-acid chain; its full sequence is Small ribosomal subunit protein uS15c (90 aa).

Belongs to the universal ribosomal protein uS15 family. In terms of assembly, part of the 30S ribosomal subunit.

The protein resides in the plastid. It localises to the chloroplast. This is Small ribosomal subunit protein uS15c (rps15) from Drimys granadensis.